A 154-amino-acid chain; its full sequence is Peptide deformylase (154 aa).

Fe cation contacts are provided by Cys90 and His132. Residue Glu133 is part of the active site. Fe cation is bound at residue His136.

The protein belongs to the polypeptide deformylase family. The cofactor is Fe(2+).

It carries out the reaction N-terminal N-formyl-L-methionyl-[peptide] + H2O = N-terminal L-methionyl-[peptide] + formate. In terms of biological role, removes the formyl group from the N-terminal Met of newly synthesized proteins. Requires at least a dipeptide for an efficient rate of reaction. N-terminal L-methionine is a prerequisite for activity but the enzyme has broad specificity at other positions. This Desulforudis audaxviator (strain MP104C) protein is Peptide deformylase.